The chain runs to 191 residues: Vascular endothelial growth factor A (191 aa).

The first 26 residues, 1–26 (MNFLLTWIHWGLAALLYFHNAKVLQA), serve as a signal peptide directing secretion. 3 cysteine pairs are disulfide-bonded: C52–C94, C83–C128, and C87–C130. N-linked (GlcNAc...) asparagine glycosylation is present at N101.

The protein belongs to the PDGF/VEGF growth factor family. Homodimer; disulfide-linked. Also found as heterodimer with PGF. As to expression, expressed by the venom gland, and probably other tissues.

The protein resides in the secreted. Its function is as follows. Growth factor active in angiogenesis, vasculogenesis and endothelial cell growth. Induces endothelial cell proliferation, promotes cell migration, inhibits apoptosis and induces permeabilization of blood vessels. Binds to heparan sulfate and heparin. The protein is Vascular endothelial growth factor A of Bitis gabonica (Gaboon adder).